We begin with the raw amino-acid sequence, 896 residues long: Bifunctional glutamine synthetase adenylyltransferase/adenylyl-removing enzyme (896 aa).

An adenylyl removase region spans residues 1–411; it reads MSDNRLDTAR…LFNEILSEPE (411 aa). The adenylyl transferase stretch occupies residues 417–896; it reads NSEWQWAWQE…EVFGEEAATA (480 aa).

It belongs to the GlnE family. Mg(2+) is required as a cofactor.

The enzyme catalyses [glutamine synthetase]-O(4)-(5'-adenylyl)-L-tyrosine + phosphate = [glutamine synthetase]-L-tyrosine + ADP. The catalysed reaction is [glutamine synthetase]-L-tyrosine + ATP = [glutamine synthetase]-O(4)-(5'-adenylyl)-L-tyrosine + diphosphate. Functionally, involved in the regulation of glutamine synthetase GlnA, a key enzyme in the process to assimilate ammonia. When cellular nitrogen levels are high, the C-terminal adenylyl transferase (AT) inactivates GlnA by covalent transfer of an adenylyl group from ATP to specific tyrosine residue of GlnA, thus reducing its activity. Conversely, when nitrogen levels are low, the N-terminal adenylyl removase (AR) activates GlnA by removing the adenylyl group by phosphorolysis, increasing its activity. The regulatory region of GlnE binds the signal transduction protein PII (GlnB) which indicates the nitrogen status of the cell. This is Bifunctional glutamine synthetase adenylyltransferase/adenylyl-removing enzyme from Neisseria meningitidis serogroup A / serotype 4A (strain DSM 15465 / Z2491).